Reading from the N-terminus, the 586-residue chain is MAHSAEPSSSLSFTSSPHLSNGSISHNLSCSGSESVPSLEVISLSKLSSSLEQLLIDPGCDYSDADIVVEGIPVGVHRCILASRSGFFRELFKREKGSSGKEDRPKYCMSDFLPYGDVGYEAFLVFLSYVYTGKLKPSPVEVSTCVHNVCAHDACRPAINFVVELMYAASIFQMPDLVSIFERRLLNFVGKALSDNVVPILLVAFHCQLNQLIDQCVDRVARSDIDDISLEKGLPDEVVKKIKILRRNYQQDSDPNLPPADPLHEKRIRRIHKALDSDDVELVKLLLTESNITLDEANALHYAAAYCDPKVVTEVLALGLADVNLRNSRGYTALHIAVMRKEPSIIVLLLTKGARASELTSDGQSAVSICRRLTRPKDYHSKTEQGQEANKDRICIDVLEREMRRNPMAGDASISSQIMPDDLHMELLNLENRVALARLFFPAEAKLAMVIAHAETSEFAAPSSSKGSSGNLMEVDLNETPTVQNKRLHSRLEALMKTVRLGRCYFPHCSEVLDKFIDDDLPHLFYLEPGSSDEQKVKRRRFMELKEEVQKAFDKDKAECNLSGLSSSSSTTSPEKIGANQKVREP.

Residues 63 to 139 enclose the BTB domain; the sequence is SDADIVVEGI…VYTGKLKPSP (77 aa). The C2HC NPR-type zinc-finger motif lies at 142 to 156; it reads VSTCVHNVCAHDACR. Zn(2+) contacts are provided by Cys-145, Cys-150, His-152, and Cys-155. ANK repeat units lie at residues 266-296, 298-325, and 329-358; these read KRIRRIHKALDSDDVELVKLLLTESNITLDE, NALHYAAAYCDPKVVTEVLALGLADVNL, and RGYTALHIAVMRKEPSIIVLLLTKGARASE. Positions 388–522 are salicylic acid-binding core (SBC); the sequence is EANKDRICID…LDKFIDDDLP (135 aa). Salicylate is bound at residue Arg-433. The interval 561 to 586 is disordered; the sequence is NLSGLSSSSSTTSPEKIGANQKVREP. The segment covering 562 to 573 has biased composition (low complexity); the sequence is LSGLSSSSSTTS.

Belongs to the plant 'ANKYRIN-BTB/POZ' family. 'NPR1-like' subfamily. Highly expressed in leaves. Expressed at low levels in roots and stems.

The protein localises to the cytoplasm. It is found in the nucleus. It localises to the nuclear body. It participates in protein modification; protein ubiquitination. Salicylic acid (SA)-binding substrate-specific adapter of an E3 ubiquitin-protein ligase complex (CUL3-RBX1-BTB) which mediates the ubiquitination and subsequent proteasomal degradation of target proteins. Transcription cofactor that represses gene expression in the absence of salicylic acid (SA), when attached to negative cis-elements (W-box) with WRKY transcription factors, but stimulates gene expression upon activation by SA, when sumoylated and attached to positive cis-elements (as-1) with TGA transcription factors, thus confering immunity through a series of gene regulations ending in a significant increase in antimicrobial and defense genes expression. Probable component of the salicylic acid (SA) defense signaling pathway and pathogen-induced systemic acquired resistance (SAR). May be involved in disease resistance against fungal pathogens. May be involved in tolerance to salt and osmotic stresses. The sequence is that of BTB/POZ domain and ankyrin repeat-containing protein NPR1 from Malus hupehensis (Chinese crab apple).